Reading from the N-terminus, the 119-residue chain is Non-specific lipid-transfer protein 11 (119 aa).

Positions 1-28 (MRNITTTTRKMLLLVITILLGIAYHGEA) are cleaved as a signal peptide. Cystine bridges form between cysteine 31/cysteine 78, cysteine 41/cysteine 55, cysteine 56/cysteine 101, and cysteine 76/cysteine 115.

It belongs to the plant LTP family.

Functionally, plant non-specific lipid-transfer proteins transfer phospholipids as well as galactolipids across membranes. May play a role in wax or cutin deposition in the cell walls of expanding epidermal cells and certain secretory tissues. This is Non-specific lipid-transfer protein 11 (LTP11) from Arabidopsis thaliana (Mouse-ear cress).